A 281-amino-acid chain; its full sequence is NADPH-dependent 7-cyano-7-deazaguanine reductase (281 aa).

87 to 89 (IES) provides a ligand contact to substrate. NADPH is bound at residue 89-90 (SK). Cysteine 188 (thioimide intermediate) is an active-site residue. The Proton donor role is filled by aspartate 195. 227-228 (HE) lines the substrate pocket. 256 to 257 (RG) provides a ligand contact to NADPH.

It belongs to the GTP cyclohydrolase I family. QueF type 2 subfamily. Homodimer.

It localises to the cytoplasm. It catalyses the reaction 7-aminomethyl-7-carbaguanine + 2 NADP(+) = 7-cyano-7-deazaguanine + 2 NADPH + 3 H(+). Its pathway is tRNA modification; tRNA-queuosine biosynthesis. In terms of biological role, catalyzes the NADPH-dependent reduction of 7-cyano-7-deazaguanine (preQ0) to 7-aminomethyl-7-deazaguanine (preQ1). This chain is NADPH-dependent 7-cyano-7-deazaguanine reductase, found in Photobacterium profundum (strain SS9).